A 163-amino-acid polypeptide reads, in one-letter code: MPKPPDYSELSDSLTLPVGTGRFSGPLHRAWRMMNFRQRMGWIGVGLYLLASAAAFYYVFEINETYNRLALEHIQQHPEEPLEGTTWTHSLKSRLLSLPFWFWTIIFLIPYLQMFLFLYSCTRADPKTVGYCIIPICLAVICNRHQAFVKASNQISRLQLIDT.

The next 2 membrane-spanning stretches (helical) occupy residues 40–60 (MGWI…YYVF) and 98–118 (LPFW…FLFL).

This sequence belongs to the LYSET family. In terms of assembly, interacts with GNPTAB; this interaction is important for proper localization of GNPTAB in Golgi stacks. Interacts with MBTPS1.

Its subcellular location is the golgi apparatus membrane. In terms of biological role, required for mannose-6-phosphate-dependent trafficking of lysosomal enzymes. LYSET bridges GlcNAc-1-phosphate transferase (GNPTAB), to the membrane-bound transcription factor site-1 protease (MBTPS1), thus allowing proteolytic activation of the GNPTAB. GNPTAB is involved in the regulation of M6P-dependent Golgi-to-lysosome trafficking of lysosomal enzymes. LYSET is thus an essential factor for maturation and delivery of lysosomal hydrolases. The sequence is that of Lysosomal enzyme trafficking factor (LYSET) from Sus scrofa (Pig).